Consider the following 145-residue polypeptide: Basic phospholipase A2 P'513 (145 aa).

Residues Met-1–Ala-21 form the signal peptide. Residues Ile-22–Leu-27 constitute a propeptide that is removed on maturation. Intrachain disulfides connect Cys-38/Cys-98, Cys-54/Cys-144, Cys-56/Cys-72, Cys-71/Cys-125, Cys-78/Cys-118, Cys-87/Cys-111, and Cys-105/Cys-116. Tyr-55, Gly-57, and Gly-59 together coordinate Ca(2+). His-75 is a catalytic residue. Asp-76 contacts Ca(2+). The active site involves Asp-119.

This sequence belongs to the phospholipase A2 family. Group I subfamily. D49 sub-subfamily. Requires Ca(2+) as cofactor. Expressed by the venom gland.

It is found in the secreted. The enzyme catalyses a 1,2-diacyl-sn-glycero-3-phosphocholine + H2O = a 1-acyl-sn-glycero-3-phosphocholine + a fatty acid + H(+). In terms of biological role, PLA2 catalyzes the calcium-dependent hydrolysis of the 2-acyl groups in 3-sn-phosphoglycerides. This Laticauda laticaudata (Blue-ringed sea krait) protein is Basic phospholipase A2 P'513.